The chain runs to 113 residues: Large ribosomal subunit protein eL31 (113 aa).

The protein belongs to the eukaryotic ribosomal protein eL31 family.

This chain is Large ribosomal subunit protein eL31 (RPL31), found in Candida glabrata (strain ATCC 2001 / BCRC 20586 / JCM 3761 / NBRC 0622 / NRRL Y-65 / CBS 138) (Yeast).